The following is a 372-amino-acid chain: Ribosomal RNA small subunit methyltransferase H (372 aa).

S-adenosyl-L-methionine is bound by residues 44–46 (GGH), Asp63, Leu97, Asp111, and Gln118. Over residues 315-334 (RAAERLDPTAEQRRRTDRER) the composition is skewed to basic and acidic residues. The interval 315 to 372 (RAAERLDPTAEQRRRTDRERYRRRVRAMHQPGTGSAVRRPTPGDDGTGTDEEGEGHDS) is disordered. Residues 361 to 372 (TGTDEEGEGHDS) are compositionally biased toward acidic residues.

This sequence belongs to the methyltransferase superfamily. RsmH family.

It localises to the cytoplasm. The enzyme catalyses cytidine(1402) in 16S rRNA + S-adenosyl-L-methionine = N(4)-methylcytidine(1402) in 16S rRNA + S-adenosyl-L-homocysteine + H(+). In terms of biological role, specifically methylates the N4 position of cytidine in position 1402 (C1402) of 16S rRNA. This Salinispora arenicola (strain CNS-205) protein is Ribosomal RNA small subunit methyltransferase H.